A 372-amino-acid chain; its full sequence is Tomoregulin-1 (372 aa).

The first 36 residues, 1 to 36 (MGAQAPLRLPAAPPLAVCGYTSVLLLFAFCLPGSRA), serve as a signal peptide directing secretion. Residues 37–322 (SNQPAGGGGD…VPSRQKLTHV (286 aa)) are Extracellular-facing. Residue asparagine 55 is glycosylated (N-linked (GlcNAc...) asparagine). A Kazal-like 1 domain is found at 90 to 137 (ACQFQCHTNYIPVCGSNGDTYQNECFLRRAACKHQKDITVVARGPCYS). Cystine bridges form between cysteine 91–cysteine 121, cysteine 95–cysteine 114, and cysteine 103–cysteine 135. Asparagine 139 is a glycosylation site (N-linked (GlcNAc...) asparagine). Residues 139–161 (NGSGSGEGEEEGSGAGAHRKHSK) are disordered. One can recognise a Kazal-like 2 domain in the interval 181 to 229 (VCNIDCSGYSFNPVCASDGSSYNNPCFVREASCIKQEQIDIRHLGHCTD). Disulfide bonds link cysteine 182-cysteine 213, cysteine 186-cysteine 206, cysteine 195-cysteine 227, cysteine 267-cysteine 280, cysteine 275-cysteine 291, and cysteine 293-cysteine 302. The 41-residue stretch at 263–303 (SHMPCPENLNGYCIHGKCEFIYSTQKASCRCESGYTGQHCE) folds into the EGF-like domain. The helical transmembrane segment at 323 to 343 (LIAAIIGAVQIAIIVAIVMCI) threads the bilayer. Over 344–372 (TRKCPKNNRGRRQKQNLGHFTSDTSSRMV) the chain is Cytoplasmic. The interval 351–372 (NRGRRQKQNLGHFTSDTSSRMV) is disordered. Polar residues predominate over residues 358-372 (QNLGHFTSDTSSRMV).

It belongs to the tomoregulin family. May interact with ST14. Maily expressed in neurons. Expressed in brain, neurointermediate lobe, pars distalis, pancreas, ovary and testis.

It is found in the cell membrane. In terms of biological role, neuron-specific restriction factor that prevents herpes simplex virus 1 (HHV-1) infection in the brain by blocking viral entry. Also able to restrict herpes simplex virus 2 (HHV-2) infection, although to a lesser extent. Acts by preventing the association between the viral glycoprotein D (gD) and its cell surface receptor NECTIN1, thereby inhibiting fusion of the virus and the cell membrane. Also able to prevent the association between the viral glycoprotein B (gB) and MYH9/NMMHC-IIA and MYH10/NMMHC-IIB receptors. The chain is Tomoregulin-1 from Mus musculus (Mouse).